The sequence spans 120 residues: U13-lycotoxin-Ls1a (120 aa).

An N-terminal signal peptide occupies residues 1–16; that stretch reads MKILFVLISILYAVYC. A propeptide spanning residues 17–54 is cleaved from the precursor; the sequence is FSSEEDVDSAYLANELEPVEDINSEQYAALEPKEEQER. 4 disulfides stabilise this stretch: Cys56-Cys70, Cys63-Cys76, Cys69-Cys87, and Cys78-Cys85. In terms of domain architecture, Agouti spans 56-95; it reads CADMGQDCKDDCDCCLNIATCNCWFGRYFCSCTFGDYQTC.

This sequence belongs to the neurotoxin 05 (agouti) family. In terms of processing, contains 6 disulfide bonds. As to expression, expressed by the venom gland.

Its subcellular location is the secreted. This chain is U13-lycotoxin-Ls1a, found in Lycosa singoriensis (Wolf spider).